Consider the following 421-residue polypeptide: FBD-associated F-box protein At5g56370 (421 aa).

Positions 1-52 constitute an F-box domain; that stretch reads MDSISLLPDDFLLRILSLLPTKDVLNTSVLSKRWRYLWKLVPKLQYSLIDKN. Residues 332 to 382 form the FBD domain; sequence HWEEPSSVPETLMFVLETLEWRNYRGLKMENELASFLLKHSRRLKIATFSP.

The polypeptide is FBD-associated F-box protein At5g56370 (Arabidopsis thaliana (Mouse-ear cress)).